We begin with the raw amino-acid sequence, 196 residues long: Inosine triphosphate pyrophosphatase 2 (196 aa).

20–25 (TGNDGK) is an ITP binding site. Residue Glu-48 participates in Mg(2+) binding. ITP is bound by residues Lys-61, 77–78 (DT), Lys-94, 153–156 (FGWD), Lys-177, and 182–183 (PR).

This sequence belongs to the HAM1 NTPase family. As to quaternary structure, homodimer. Requires Mg(2+) as cofactor. Mn(2+) serves as cofactor.

Its subcellular location is the cytoplasm. It catalyses the reaction ITP + H2O = IMP + diphosphate + H(+). The enzyme catalyses dITP + H2O = dIMP + diphosphate + H(+). It carries out the reaction XTP + H2O = XMP + diphosphate + H(+). Functionally, pyrophosphatase that hydrolyzes non-canonical purine nucleotides such as inosine triphosphate (ITP), deoxyinosine triphosphate (dITP) or xanthosine 5'-triphosphate (XTP) to their respective monophosphate derivatives. The enzyme does not distinguish between the deoxy- and ribose forms. Probably excludes non-canonical purines from RNA and DNA precursor pools, thus preventing their incorporation into RNA and DNA and avoiding chromosomal lesions. This is Inosine triphosphate pyrophosphatase 2 from Trypanosoma cruzi (strain CL Brener).